A 206-amino-acid polypeptide reads, in one-letter code: Superoxide dismutase [Mn] (206 aa).

Histidine 27, histidine 82, aspartate 168, and histidine 172 together coordinate Mn(2+).

This sequence belongs to the iron/manganese superoxide dismutase family. Homodimer. Mn(2+) is required as a cofactor.

It carries out the reaction 2 superoxide + 2 H(+) = H2O2 + O2. Destroys superoxide anion radicals which are normally produced within the cells and which are toxic to biological systems. The sequence is that of Superoxide dismutase [Mn] (sodA) from Escherichia coli O157:H7.